The following is a 217-amino-acid chain: Cytidylate kinase (217 aa).

9-17 contacts ATP; the sequence is GPAGSGKTT.

This sequence belongs to the cytidylate kinase family. Type 1 subfamily.

It localises to the cytoplasm. The enzyme catalyses CMP + ATP = CDP + ADP. It carries out the reaction dCMP + ATP = dCDP + ADP. This Thermosipho melanesiensis (strain DSM 12029 / CIP 104789 / BI429) protein is Cytidylate kinase.